A 39-amino-acid chain; its full sequence is ORF8a protein (39 aa).

Positions methionine 1–cysteine 15 are cleaved as a signal peptide. In terms of domain architecture, SARS ORF8 Ig-like spans isoleucine 16–histidine 39.

The sequence is that of ORF8a protein from Homo sapiens (Human).